We begin with the raw amino-acid sequence, 338 residues long: Fructose-1,6-bisphosphatase class 1 (338 aa).

The Mg(2+) site is built by Glu92, Asp113, Leu115, and Asp116. Residues 116 to 119, Asn208, and Lys274 each bind substrate; that span reads DGSS. Glu280 is a binding site for Mg(2+).

The protein belongs to the FBPase class 1 family. In terms of assembly, homotetramer. Mg(2+) is required as a cofactor.

The protein resides in the cytoplasm. It carries out the reaction beta-D-fructose 1,6-bisphosphate + H2O = beta-D-fructose 6-phosphate + phosphate. The protein operates within carbohydrate biosynthesis; gluconeogenesis. This chain is Fructose-1,6-bisphosphatase class 1, found in Paramagnetospirillum magneticum (strain ATCC 700264 / AMB-1) (Magnetospirillum magneticum).